The sequence spans 365 residues: Putative carbonic anhydrase-like protein 1 (365 aa).

Positions 1–25 (MRFECSHFPLFLIILTCHISPLKSS) are cleaved as a signal peptide. Residues 28-356 (YQWSYDSDVF…TNNRLVRTNI (329 aa)) enclose the Alpha-carbonic anhydrase domain. The active site involves Tyr223. Substrate is bound by residues Thr295 and 295 to 296 (TS).

It belongs to the alpha-carbonic anhydrase family.

It is found in the secreted. The sequence is that of Putative carbonic anhydrase-like protein 1 (cah-1) from Caenorhabditis elegans.